The chain runs to 107 residues: Integration host factor subunit alpha (107 aa).

The protein belongs to the bacterial histone-like protein family. Heterodimer of an alpha and a beta chain.

Its function is as follows. This protein is one of the two subunits of integration host factor, a specific DNA-binding protein that functions in genetic recombination as well as in transcriptional and translational control. In Mesorhizobium japonicum (strain LMG 29417 / CECT 9101 / MAFF 303099) (Mesorhizobium loti (strain MAFF 303099)), this protein is Integration host factor subunit alpha.